Here is a 306-residue protein sequence, read N- to C-terminus: D-alanine--D-alanine ligase (306 aa).

The ATP-grasp domain occupies 101 to 303 (KQVWQAVGLP…FSQLVVKILE (203 aa)). 134–189 (FTHLGLPLIVKPSREGSSVGMSKVNTLSELPAALEEAFRHDDDILVEKWLSGPEYT) lines the ATP pocket. Mg(2+) is bound by residues D257, E270, and N272.

The protein belongs to the D-alanine--D-alanine ligase family. It depends on Mg(2+) as a cofactor. Mn(2+) serves as cofactor.

It is found in the cytoplasm. The enzyme catalyses 2 D-alanine + ATP = D-alanyl-D-alanine + ADP + phosphate + H(+). Its pathway is cell wall biogenesis; peptidoglycan biosynthesis. Its function is as follows. Cell wall formation. In Pectobacterium carotovorum subsp. carotovorum (strain PC1), this protein is D-alanine--D-alanine ligase.